The sequence spans 346 residues: MAHRPRWTLSQVTELFEKPLLDLLFEAQQVHRQHFEPRQVQVSTLLSIKTGACPEDCKYCPQSSRYKTGLEAERLMEVEQVLESARKAKAAGSTRFCMGAAWKNPHERDMPYLEQMVQGVKAMGLEACMTLGTLSESQAQRLANAGLDYYNHNLDTSPEFYGNIITTRTYQERLDTLEKVRDAGIKVCSGGIVGLGETVKDRAGLLLQLANLPTPPESVPINMLVKVKGTPLADNDDVDAFDFIRTIAVARIMMPTSYVRLSAGREQMNEQTQAMCFMAGANSIFYGCKLLTTPNPEEDKDLQLFRKLGLNPQQTAVLAGDNEQQQRLGQALMTPDTDEYYNAAAL.

The 219-residue stretch at 38 to 256 (RQVQVSTLLS…IAVARIMMPT (219 aa)) folds into the Radical SAM core domain. The [4Fe-4S] cluster site is built by Cys53, Cys57, and Cys60. Positions 97, 128, 188, and 260 each coordinate [2Fe-2S] cluster.

The protein belongs to the radical SAM superfamily. Biotin synthase family. In terms of assembly, homodimer. The cofactor is [4Fe-4S] cluster. It depends on [2Fe-2S] cluster as a cofactor.

The enzyme catalyses (4R,5S)-dethiobiotin + (sulfur carrier)-SH + 2 reduced [2Fe-2S]-[ferredoxin] + 2 S-adenosyl-L-methionine = (sulfur carrier)-H + biotin + 2 5'-deoxyadenosine + 2 L-methionine + 2 oxidized [2Fe-2S]-[ferredoxin]. Its pathway is cofactor biosynthesis; biotin biosynthesis; biotin from 7,8-diaminononanoate: step 2/2. Its function is as follows. Catalyzes the conversion of dethiobiotin (DTB) to biotin by the insertion of a sulfur atom into dethiobiotin via a radical-based mechanism. The protein is Biotin synthase of Shigella flexneri serotype 5b (strain 8401).